The sequence spans 213 residues: LexA repressor (213 aa).

Positions 29 to 49 (RAEIAQALGFRSPNAAEDHLK) form a DNA-binding region, H-T-H motif. Active-site for autocatalytic cleavage activity residues include S131 and K168.

Belongs to the peptidase S24 family. Homodimer.

The enzyme catalyses Hydrolysis of Ala-|-Gly bond in repressor LexA.. Represses a number of genes involved in the response to DNA damage (SOS response), including recA and lexA. In the presence of single-stranded DNA, RecA interacts with LexA causing an autocatalytic cleavage which disrupts the DNA-binding part of LexA, leading to derepression of the SOS regulon and eventually DNA repair. In Bordetella avium (strain 197N), this protein is LexA repressor.